Consider the following 81-residue polypeptide: MNPLIASASVIAAGLAVGLASIGPGIGQGTAAGQAVEGIARQPEVDGKIRGTLLLSLAFMEALTIYGLVVALALLFANPFV.

Helical transmembrane passes span 3–23 (PLIA…ASIG) and 57–77 (LAFM…LLFA).

This sequence belongs to the ATPase C chain family. F-type ATPases have 2 components, F(1) - the catalytic core - and F(0) - the membrane proton channel. F(1) has five subunits: alpha(3), beta(3), gamma(1), delta(1), epsilon(1). F(0) has four main subunits: a(1), b(1), b'(1) and c(10-14). The alpha and beta chains form an alternating ring which encloses part of the gamma chain. F(1) is attached to F(0) by a central stalk formed by the gamma and epsilon chains, while a peripheral stalk is formed by the delta, b and b' chains.

The protein resides in the plastid. It is found in the chloroplast thylakoid membrane. In terms of biological role, f(1)F(0) ATP synthase produces ATP from ADP in the presence of a proton or sodium gradient. F-type ATPases consist of two structural domains, F(1) containing the extramembraneous catalytic core and F(0) containing the membrane proton channel, linked together by a central stalk and a peripheral stalk. During catalysis, ATP synthesis in the catalytic domain of F(1) is coupled via a rotary mechanism of the central stalk subunits to proton translocation. Key component of the F(0) channel; it plays a direct role in translocation across the membrane. A homomeric c-ring of between 10-14 subunits forms the central stalk rotor element with the F(1) delta and epsilon subunits. This Chaetosphaeridium globosum (Charophycean green alga) protein is ATP synthase subunit c, chloroplastic.